A 130-amino-acid chain; its full sequence is Small ribosomal subunit protein uS8 (130 aa).

It belongs to the universal ribosomal protein uS8 family. Part of the 30S ribosomal subunit.

One of the primary rRNA binding proteins, it binds directly to 16S rRNA central domain where it helps coordinate assembly of the platform of the 30S subunit. This Thermococcus kodakarensis (strain ATCC BAA-918 / JCM 12380 / KOD1) (Pyrococcus kodakaraensis (strain KOD1)) protein is Small ribosomal subunit protein uS8.